A 230-amino-acid chain; its full sequence is Cytidylate kinase (230 aa).

10–18 (GPAGSGKST) is a binding site for ATP.

It belongs to the cytidylate kinase family. Type 1 subfamily.

The protein localises to the cytoplasm. The catalysed reaction is CMP + ATP = CDP + ADP. It catalyses the reaction dCMP + ATP = dCDP + ADP. The chain is Cytidylate kinase from Leptospira borgpetersenii serovar Hardjo-bovis (strain JB197).